A 267-amino-acid polypeptide reads, in one-letter code: MDLDLLARIKRHEVLAAIRAGERIDGRDFEEFRPIEVRAGVISKANGSALVRLGNTQLVVGVKLEVGRPYPDSPNEGALAVNAELVPLADPSFEPGPPDENAIELSRVVDRGIRESEMIDLEELCIEEGEHCWVTFVDIHVLDHDGNLFDASMIGSVSALSITEVPKAEVVDDEVEVMEEDTEPLAINDFPISVTIAKVGEYLLVDPCLEEEVIMDTRLTVTVTESGEVCAVQKGELGDFPEHLLEDAIDLATKKAEEVRRTVKAQL.

This sequence belongs to the RNase PH family. Rrp42 subfamily. Component of the archaeal exosome complex. Forms a hexameric ring-like arrangement composed of 3 Rrp41-Rrp42 heterodimers. The hexameric ring associates with a trimer of Rrp4 and/or Csl4 subunits.

It is found in the cytoplasm. Non-catalytic component of the exosome, which is a complex involved in RNA degradation. Contributes to the structuring of the Rrp41 active site. The chain is Exosome complex component Rrp42 from Methanopyrus kandleri (strain AV19 / DSM 6324 / JCM 9639 / NBRC 100938).